The chain runs to 418 residues: UDP-N-acetylglucosamine 1-carboxyvinyltransferase (418 aa).

A phosphoenolpyruvate-binding site is contributed by 23 to 24 (KN). Arg-92 provides a ligand contact to UDP-N-acetyl-alpha-D-glucosamine. Cys-116 (proton donor) is an active-site residue. Cys-116 carries the post-translational modification 2-(S-cysteinyl)pyruvic acid O-phosphothioketal. UDP-N-acetyl-alpha-D-glucosamine-binding positions include 121–125 (RPVDL), 161–164 (KVSV), Asp-306, and Ile-328.

Belongs to the EPSP synthase family. MurA subfamily.

The protein localises to the cytoplasm. The catalysed reaction is phosphoenolpyruvate + UDP-N-acetyl-alpha-D-glucosamine = UDP-N-acetyl-3-O-(1-carboxyvinyl)-alpha-D-glucosamine + phosphate. It functions in the pathway cell wall biogenesis; peptidoglycan biosynthesis. Functionally, cell wall formation. Adds enolpyruvyl to UDP-N-acetylglucosamine. The protein is UDP-N-acetylglucosamine 1-carboxyvinyltransferase of Vibrio parahaemolyticus serotype O3:K6 (strain RIMD 2210633).